The chain runs to 780 residues: ATP-dependent 6-phosphofructokinase, liver type (780 aa).

The residue at position 2 (A2) is an N-acetylalanine. The segment at 2–390 (AAVDLEKLRA…NWNIYKLLAH (389 aa)) is N-terminal catalytic PFK domain 1. ATP contacts are provided by residues G25, 88–89 (RC), and 118–121 (GDGS). Residue D119 coordinates Mg(2+). Residues 164–166 (SID), R201, 208–210 (MGR), E264, R292, and 298–301 (HVQR) each bind substrate. D166 acts as the Proton acceptor in catalysis. A Phosphoserine modification is found at S377. The tract at residues 391-400 (QKPPKEKSNF) is interdomain linker. Residues 401-780 (SLAILNVGAP…RRTLSMDKGF (380 aa)) are C-terminal regulatory PFK domain 2. Residues R470, 527–531 (TISNN), R565, 572–574 (MGG), and E628 each bind beta-D-fructose 2,6-bisphosphate. A glycan (O-linked (GlcNAc) serine) is linked at S529. Position 640 is a phosphotyrosine (Y640). Residues R654, 660 to 663 (HLQQ), and R734 contribute to the beta-D-fructose 2,6-bisphosphate site. Position 775 is a phosphoserine (S775).

Belongs to the phosphofructokinase type A (PFKA) family. ATP-dependent PFK group I subfamily. Eukaryotic two domain clade 'E' sub-subfamily. Homo- and heterotetramers. Phosphofructokinase (PFK) enzyme functions as a tetramer composed of different combinations of 3 types of subunits, called PFKM (where M stands for Muscle), PFKL (Liver) and PFKP (Platelet). The composition of the PFK tetramer differs according to the tissue type it is present in. In muscles, it is composed of 4 PFKM subunits (also called M4). In the liver, the predominant form is a tetramer of PFKL subunits (L4). In erythrocytes, both PFKM and PFKL subunits randomly tetramerize to form M4, L4 and other combinations (ML3, M2L2, M3L). The kinetic and regulatory properties of the tetrameric enzyme are dependent on the subunit composition, hence can vary across tissues. The cofactor is Mg(2+). Post-translationally, glcNAcylation at Ser-529 by OGT decreases enzyme activity, leading to redirect glucose flux through the oxidative pentose phosphate pathway. Glycosylation is stimulated by both hypoxia and glucose deprivation.

Its subcellular location is the cytoplasm. It catalyses the reaction beta-D-fructose 6-phosphate + ATP = beta-D-fructose 1,6-bisphosphate + ADP + H(+). It functions in the pathway carbohydrate degradation; glycolysis; D-glyceraldehyde 3-phosphate and glycerone phosphate from D-glucose: step 3/4. With respect to regulation, allosterically activated by ADP, AMP, or fructose 2,6-bisphosphate, and allosterically inhibited by ATP or citrate. GlcNAcylation by OGT overcomes allosteric regulation. Catalyzes the phosphorylation of D-fructose 6-phosphate to fructose 1,6-bisphosphate by ATP, the first committing step of glycolysis. Negatively regulates the phagocyte oxidative burst in response to bacterial infection by controlling cellular NADPH biosynthesis and NADPH oxidase-derived reactive oxygen species. Upon macrophage activation, drives the metabolic switch toward glycolysis, thus preventing glucose turnover that produces NADPH via pentose phosphate pathway. This chain is ATP-dependent 6-phosphofructokinase, liver type, found in Homo sapiens (Human).